Consider the following 266-residue polypeptide: Ribosome-recycling factor, chloroplastic (266 aa).

Over residues 1–26 (MPPLHAVSPAAAAAPPRALSSAARVP) the composition is skewed to low complexity. The disordered stretch occupies residues 1–30 (MPPLHAVSPAAAAAPPRALSSAARVPQRPG). Residues 1-74 (MPPLHAVSPA…SDKRAVLRHA (74 aa)) constitute a chloroplast transit peptide. 2 coiled-coil regions span residues 75 to 109 (TIEE…NTVR) and 207 to 266 (VAIR…LMKI).

Belongs to the RRF family.

Its subcellular location is the plastid. The protein localises to the chloroplast. Functionally, responsible for the release of ribosomes from messenger RNA at the termination of chloroplastic protein biosynthesis. In Oryza sativa subsp. indica (Rice), this protein is Ribosome-recycling factor, chloroplastic.